Consider the following 963-residue polypeptide: Ubiquitin carboxyl-terminal hydrolase 4 (963 aa).

The region spanning 11-122 (PDAETQKSEL…GQQPIVRKVV (112 aa)) is the DUSP domain. Residues 27–216 (TLQRGAQWYL…LYQGQVLVIE (190 aa)) are necessary for interaction with SART3. Positions 133-141 (VEVYLLELK) match the Nuclear export signal motif. Residues 142–226 (LCENSDPTNV…PQNEDGTWPR (85 aa)) form the Ubiquitin-like 1 domain. A disordered region spans residues 219–277 (NEDGTWPRQTQQSKSSTAPSRNFTTSPKSSASPYSSVSASPIANGDSTNTSGMHSSGVS). A compositionally biased stretch (polar residues) spans 225-243 (PRQTQQSKSSTAPSRNFTT). The tract at residues 229–295 (QQSKSSTAPS…SYNCQESPLT (67 aa)) is required for USP4 activation by providing conformational flexibility between the DUSP and catalytic domains. Low complexity predominate over residues 244–261 (SPKSSASPYSSVSASPIA). The USP domain maps to 302–923 (CGLGNLGNTC…AAYVLFYQRR (622 aa)). Cys-311 acts as the Nucleophile in catalysis. The regulates ubiquitin dissociation stretch occupies residues 384–386 (PQF). Residues 405–407 (LHE) form a necessary for interaction with RBL2 region. The residue at position 445 (Ser-445) is a Phosphoserine. The necessary for interaction with RB1 and RBL2 stretch occupies residues 459–463 (LVCPE). Zn(2+)-binding residues include Cys-461 and Cys-464. One can recognise a Ubiquitin-like 2 domain in the interval 483 to 571 (LKKDRVMEIF…IFVYEVCSTS (89 aa)). The interval 485-775 (KDRVMEIFLV…LQPQKKKKTA (291 aa)) is interacts with DUSP and ubiquitin-like 1 domains and is required for USP4 activation. Residues 634 to 701 (PLPDESGSSP…ATQKKNKGRP (68 aa)) are disordered. Phosphoserine is present on residues Ser-675 and Ser-680. Positions 767-772 (QPQKKK) match the Nuclear localization signal motif. Zn(2+)-binding residues include Cys-799 and Cys-802. Residue His-881 is the Proton acceptor of the active site. The interval 930–963 (TPSLSFPGSSDGGARPSSSQQGTGDDETYSMDTN) is disordered. Residues 953–963 (GDDETYSMDTN) show a composition bias toward acidic residues.

The protein belongs to the peptidase C19 family. USP4 subfamily. In terms of assembly, interacts with RB1 (both dephosphorylated and hypophosphorylated forms). Interacts with RBL1 and RBL2. Interacts with ADORA2A (via cytoplasmic C-terminus); the interaction is direct. Interacts with SART3; recruits USP4 to its substrate PRPF3. Phosphorylated at Ser-445 by PKB/AKT1 in response to EGF stimulus, promoting its ability deubiquitinate RHEB. In terms of processing, monoubiquitinated by TRIM21. Ubiquitination does not lead to its proteasomal degradation. Autodeubiquitinated.

It localises to the cytoplasm. It is found in the nucleus. The catalysed reaction is Thiol-dependent hydrolysis of ester, thioester, amide, peptide and isopeptide bonds formed by the C-terminal Gly of ubiquitin (a 76-residue protein attached to proteins as an intracellular targeting signal).. Its activity is regulated as follows. The completion of the deubiquitinase reaction is mediated by the DUSP and ubiquitin-like 1 domains which promotes the release of ubiquitin from the catalytic site enabling subsequent reactions to occur. Its function is as follows. Deubiquitinating enzyme that removes conjugated ubiquitin from target proteins. Deubiquitinates PDPK1. Deubiquitinates TRIM21. Deubiquitinates receptor ADORA2A which increases the amount of functional receptor at the cell surface. Deubiquitinates HAS2. Deubiquitinates RHEB in response to EGF signaling, promoting mTORC1 signaling. May regulate mRNA splicing through deubiquitination of the U4 spliceosomal protein PRPF3. This may prevent its recognition by the U5 component PRPF8 thereby destabilizing interactions within the U4/U6.U5 snRNP. May also play a role in the regulation of quality control in the ER. In Bos taurus (Bovine), this protein is Ubiquitin carboxyl-terminal hydrolase 4 (USP4).